The chain runs to 409 residues: Arginine deiminase (409 aa).

Cys399 acts as the Amidino-cysteine intermediate in catalysis.

It belongs to the arginine deiminase family.

It localises to the cytoplasm. The catalysed reaction is L-arginine + H2O = L-citrulline + NH4(+). The protein operates within amino-acid degradation; L-arginine degradation via ADI pathway; carbamoyl phosphate from L-arginine: step 1/2. The chain is Arginine deiminase (arcA) from Borreliella afzelii (Borrelia afzelii).